A 311-amino-acid chain; its full sequence is Progestin and adipoQ receptor family member 3 (311 aa).

The segment at 1–20 (MHQKLLKSAHYIELGSYQYW) is required for interaction with SREBF2. At 1–73 (MHQKLLKSAH…FILSNETVNI (73 aa)) the chain is on the cytoplasmic side. The tract at residues 41 to 60 (KDNPYITDGYRAYLPSRLCI) is required for interaction with SCAP. The golgi targeting stretch occupies residues 61–71 (KSLFILSNETV). Residues 74–96 (WSHLLGFFLFFTLGIYDMTSVLP) form a helical membrane-spanning segment. The Lumenal portion of the chain corresponds to 97-105 (SASASREDF). A helical transmembrane segment spans residues 106–128 (VICSICLFCFQVCMLCSVGYHLF). Residues 129–140 (SCHRSEKTCRRW) lie on the Cytoplasmic side of the membrane. Residues 141-163 (MALDYAGISIGILGCYVSGVFYA) form a helical membrane-spanning segment. Residues 164 to 172 (FYCNNYWRQ) lie on the Lumenal side of the membrane. A helical membrane pass occupies residues 173–195 (VYLITVLAMILAVFFAQIHPNYL). Residues 196-201 (TQQWQR) lie on the Cytoplasmic side of the membrane. A helical transmembrane segment spans residues 202–224 (LRSIIFCSVSGYGVIPTLHWVWL). The Lumenal segment spans residues 225-238 (NGGIGAPIVQDFAP). Residues 239-256 (RVIVMYMIALLAFLFYIS) traverse the membrane as a helical segment. Over 257-275 (KVPERYFPGQLNYLGSSHQ) the chain is Cytoplasmic. Residues 276 to 298 (IWHILAVVMLYWWHQSTVYVMQY) form a helical membrane-spanning segment. The segment at 299–303 (RHSKP) is golgi targeting. Residues 299–311 (RHSKPCPDYVSHL) lie on the Lumenal side of the membrane.

The protein belongs to the ADIPOR family. As to quaternary structure, interacts with SCAP and SREBF2; the interactions are direct, increase in low cholesterol conditions and tether SCAP:SREBP complex to the Golgi apparatus. Interaction with SCAP is mutually exclusive with INSIG1. In hepatocytes, interacts with PPARA and HUWE1; the interactions promote PPARA poylubiquitination and HUWE1-mediated degradation. In macrophages, interacts with PPARG and STUB1; the interactions promote PPARG poylubiquitination and STUB1-mediated degradation. Widely expressed in a range of tissues.

It localises to the golgi apparatus membrane. Functionally, golgi-scaffold protein which modulates its interactors acitivies by anchoring them to the Golgi apparatus. Functions as a spatial regulator of RAF1 kinase by sequestrating it to the Golgi apparatus. Acts as a positive regulator of cholesterol biosynthesis by mediating the anchoring of the SCAP:SREBP complex in the Golgi apparatus, thereby promoting SCAP:SREBF2 complex formation, potentiating SREBF2 and SREBF1 processing and enhancing lipid synthesis. Also regulates PPARA and PPARG functions by mediating their interaction with E3 ubiquitin ligases, such as STUB1 or HUWE1, leading to their polyubiquitination and proteasome-mediated degradation. This Homo sapiens (Human) protein is Progestin and adipoQ receptor family member 3.